The primary structure comprises 397 residues: Lipoyl synthase 2, chloroplastic (397 aa).

The transit peptide at 1–35 (MIEQSLSKPSFSLSIPIPKAPKSKSSFFCSYSKIR) directs the protein to the chloroplast. Residues 49–85 (AKHPQNSTTINNGSSSSASVDLKNNEKGPYPYPGGGK) form a disordered region. Residues 54-67 (NSTTINNGSSSSAS) show a composition bias toward low complexity. Residues cysteine 128, cysteine 133, cysteine 139, cysteine 159, cysteine 163, cysteine 166, and serine 374 each contribute to the [4Fe-4S] cluster site. The region spanning 142-363 (GGGDGIATAT…KEYGESIGFR (222 aa)) is the Radical SAM core domain.

This sequence belongs to the radical SAM superfamily. Lipoyl synthase family. The cofactor is [4Fe-4S] cluster.

It is found in the plastid. The protein resides in the chloroplast. It carries out the reaction [[Fe-S] cluster scaffold protein carrying a second [4Fe-4S](2+) cluster] + N(6)-octanoyl-L-lysyl-[protein] + 2 oxidized [2Fe-2S]-[ferredoxin] + 2 S-adenosyl-L-methionine + 4 H(+) = [[Fe-S] cluster scaffold protein] + N(6)-[(R)-dihydrolipoyl]-L-lysyl-[protein] + 4 Fe(3+) + 2 hydrogen sulfide + 2 5'-deoxyadenosine + 2 L-methionine + 2 reduced [2Fe-2S]-[ferredoxin]. Its pathway is protein modification; protein lipoylation via endogenous pathway; protein N(6)-(lipoyl)lysine from octanoyl-[acyl-carrier-protein]: step 2/2. Functionally, catalyzes the radical-mediated insertion of two sulfur atoms into the C-6 and C-8 positions of the octanoyl moiety bound to the lipoyl domains of lipoate-dependent enzymes, thereby converting the octanoylated domains into lipoylated derivatives. This is Lipoyl synthase 2, chloroplastic from Populus trichocarpa (Western balsam poplar).